Reading from the N-terminus, the 494-residue chain is Probable malate:quinone oxidoreductase (494 aa).

This sequence belongs to the MQO family. It depends on FAD as a cofactor.

It carries out the reaction (S)-malate + a quinone = a quinol + oxaloacetate. The protein operates within carbohydrate metabolism; tricarboxylic acid cycle; oxaloacetate from (S)-malate (quinone route): step 1/1. This chain is Probable malate:quinone oxidoreductase, found in Helicobacter hepaticus (strain ATCC 51449 / 3B1).